Reading from the N-terminus, the 608-residue chain is Leucine aminopeptidase 2 (608 aa).

Residues 134 to 136 (QCQ) and 269 to 274 (PYGGME) contribute to the substrate site. Residue His-298 participates in Zn(2+) binding. The active-site Proton acceptor is Glu-299. 2 residues coordinate Zn(2+): His-302 and Glu-321. The active-site Proton donor is the Tyr-386.

It belongs to the peptidase M1 family. It depends on Zn(2+) as a cofactor.

The protein localises to the cytoplasm. Its subcellular location is the nucleus. It carries out the reaction an epoxide + H2O = an ethanediol. In terms of biological role, aminopeptidase that preferentially cleaves di- and tripeptides. Also has low epoxide hydrolase activity (in vitro). Can hydrolyze the epoxide leukotriene LTA(4) but it forms preferentially 5,6-dihydroxy-7,9,11,14-eicosatetraenoic acid rather than the cytokine leukotriene B(4) as the product compared to the homologous mammalian enzyme (in vitro). The polypeptide is Leucine aminopeptidase 2 (Sclerotinia sclerotiorum (strain ATCC 18683 / 1980 / Ss-1) (White mold)).